The primary structure comprises 75 residues: Small ribosomal subunit protein bS18 (75 aa).

This sequence belongs to the bacterial ribosomal protein bS18 family. In terms of assembly, part of the 30S ribosomal subunit. Forms a tight heterodimer with protein bS6.

In terms of biological role, binds as a heterodimer with protein bS6 to the central domain of the 16S rRNA, where it helps stabilize the platform of the 30S subunit. This chain is Small ribosomal subunit protein bS18, found in Thermotoga maritima (strain ATCC 43589 / DSM 3109 / JCM 10099 / NBRC 100826 / MSB8).